The primary structure comprises 702 residues: Mesothelin-like protein (702 aa).

A signal peptide spans 1 to 35 (MAAAVTIPGPRIGALQSSGLTLLLSLAAHCSGPQA). Topologically, residues 36 to 638 (KVLSPGGLDA…AQASTSGSLW (603 aa)) are extracellular. N-linked (GlcNAc...) asparagine glycans are attached at residues asparagine 122, asparagine 307, and asparagine 424. Residues 588–611 (QLGLDASPTSPTGPAHGTRGPPST) are disordered. Residues 639 to 668 (APLGYLPLAMALPCSLLCLLHWGTCILVSV) traverse the membrane as a helical segment. Residues 669–702 (DSVASGWLGSQGSGAGKTEVLDSAGRPLGLTGQL) lie on the Cytoplasmic side of the membrane.

This sequence belongs to the mesothelin family.

It localises to the membrane. Functionally, may play a role in cellular adhesion. This is Mesothelin-like protein (MSLNL) from Homo sapiens (Human).